Here is a 119-residue protein sequence, read N- to C-terminus: Protein TusC (119 aa).

It belongs to the DsrF/TusC family. In terms of assembly, heterohexamer, formed by a dimer of trimers. The hexameric TusBCD complex contains 2 copies each of TusB, TusC and TusD. The TusBCD complex interacts with TusE.

It is found in the cytoplasm. Part of a sulfur-relay system required for 2-thiolation of 5-methylaminomethyl-2-thiouridine (mnm(5)s(2)U) at tRNA wobble positions. This Buchnera aphidicola subsp. Schizaphis graminum (strain Sg) protein is Protein TusC.